The chain runs to 118 residues: U-scoloptoxin(05)-Cw1a (118 aa).

The first 22 residues, 1–22 (MNPLNLSTFIVFTLFAASATTA), serve as a signal peptide directing secretion.

It belongs to the scoloptoxin-05 family. Post-translationally, contains 5 disulfide bonds. In terms of tissue distribution, expressed by the venom gland.

The protein localises to the secreted. This Cormocephalus westwoodi (Westwood's green centipede) protein is U-scoloptoxin(05)-Cw1a.